The sequence spans 1608 residues: Protein REDUCED CHLOROPLAST COVERAGE 3 (1608 aa).

Over residues 1–12 (MAPRSSKGKSNN) the composition is skewed to basic residues. 2 disordered regions span residues 1 to 22 (MAPR…KKKR) and 278 to 303 (VSES…GRNG). The Clu domain occupies 288–564 (EDEHWGGNGG…KKETDVCGKP (277 aa)). TPR repeat units lie at residues 848 to 881 (GRTL…MIAV), 890 to 923 (ACAY…NERE), 932 to 965 (MKSY…LHFT), and 974 to 1007 (AATY…NKRL). Disordered stretches follow at residues 1194-1226 (VEES…RQPD), 1238-1292 (HNRN…ASGA), 1369-1400 (KQES…KTSD), 1466-1499 (TPRS…VSVD), and 1531-1552 (PAAL…KDSA). The Nuclear localization signal motif lies at 1217–1224 (GRKSRQRQ). 2 stretches are compositionally biased toward polar residues: residues 1242–1265 (QDVQ…LSKS) and 1373–1385 (QESA…LTSE). Positions 1535–1546 (SKTSPEAESGGT) are enriched in polar residues.

It localises to the nucleus. The protein localises to the cytoplasm. It is found in the cytosol. Its function is as follows. May act as the scaffold of a protein complex, which sequesters key factors that are required for the G2 to M transition in meristematic tissues. Together with REC2, REC3 and FMT/CLU, contributes to the establishment of the cellular volume devoted to the chloroplast compartment. The protein is Protein REDUCED CHLOROPLAST COVERAGE 3 of Arabidopsis thaliana (Mouse-ear cress).